The following is a 391-amino-acid chain: Nucleosome assembly protein 1-like 1 (391 aa).

Position 1 is an N-acetylmethionine (Met1). A compositionally biased stretch (basic and acidic residues) spans 1–10 (MADIDNKEQS). The segment at 1 to 32 (MADIDNKEQSELDQDLDDVEEVEEEETGEETK) is disordered. Ala2 carries the N-acetylalanine modification. Ser10 carries the phosphoserine modification. The segment covering 11–28 (ELDQDLDDVEEVEEEETG) has biased composition (acidic residues). Thr62 and Thr64 each carry phosphothreonine. The residue at position 69 (Ser69) is a Phosphoserine. At Lys116 the chain carries N6-acetyllysine. The NAP1L motif signature appears at 125–150 (YEPTEEECEWKPDEEDEISEELKEKA). Acidic residues predominate over residues 132 to 143 (CEWKPDEEDEIS). The segment at 132 to 163 (CEWKPDEEDEISEELKEKAKIEDEKKDEEKED) is disordered. Phosphoserine is present on Ser143. Residues 144 to 163 (EELKEKAKIEDEKKDEEKED) are compositionally biased toward basic and acidic residues. The short motif at 273 to 279 (IKKKQKH) is the Nuclear localization signal element. A compositionally biased stretch (acidic residues) spans 346 to 376 (AIEDDDDDYDEEGEEADEEGEEEGDEENDPD). The segment at 346 to 391 (AIEDDDDDYDEEGEEADEEGEEEGDEENDPDYDPKKDQNPAECKQQ) is disordered. Basic and acidic residues predominate over residues 377-391 (YDPKKDQNPAECKQQ). Cys388 carries the cysteine methyl ester modification. Cys388 carries the S-farnesyl cysteine lipid modification. Positions 389–391 (KQQ) are cleaved as a propeptide — removed in mature form.

It belongs to the nucleosome assembly protein (NAP) family. As to quaternary structure, homodimer. The dimer binds strongly and sequentially to single and double H2A-H2B heterodimers. Interacts with ERCC6; this interaction increases ERCC6 processivity. Interacts with RAD54. Interacts with SETD1A. (Microbial infection) Interacts with human herpesvirus 8 protein LANA1 (via N-terminus); this interaction is required for LANA1-dependent DNA replication. In terms of assembly, (Microbial infection) Interacts with hepatitis virus protein NS5A (via C-terminus); this interaction sequesters NAP1L1 in the cytoplasm, blocking its nuclear translocation. As to quaternary structure, (Microbial infection) Interacts with Chikungunya virus non-structural protein 3 (via C-terminus). Monoglycylated on glutamate residues. Cannot be polyglycylated due to the absence of functional TTLL10 in human. In terms of processing, polyglutamylated by TTLL4 on glutamate residues, resulting in polyglutamate chains on the gamma-carboxyl group. Both polyglutamylation and monoglycylation modifications can coexist on the same protein on adjacent residues, and lowering polyglycylation levels increases polyglutamylation, and reciprocally. In terms of tissue distribution, ubiquitously expressed.

The protein resides in the nucleus. The protein localises to the melanosome. Its subcellular location is the cytoplasm. In terms of biological role, histone chaperone that plays a role in the nuclear import of H2A-H2B and nucleosome assembly. Also participates in several important DNA repair mechanisms: greatly enhances ERCC6-mediated chromatin remodeling which is essential for transcription-coupled nucleotide excision DNA repair. Also stimulates homologous recombination (HR) by RAD51 and RAD54 which is essential in mitotic DNA double strand break (DSB) repair. Plays a key role in the regulation of embryonic neurogenesis. Promotes the proliferation of neural progenitors and inhibits neuronal differentiation during cortical development. Regulates neurogenesis via the modulation of RASSF10; regulates RASSF10 expression by promoting SETD1A-mediated H3K4 methylation at the RASSF10 promoter. Its function is as follows. (Microbial infection) Positively regulates Epstein-Barr virus reactivation in epithelial cells through the induction of viral BZLF1 expression. (Microbial infection) Together with human herpesvirus 8 protein LANA1, assists the proper assembly of the nucleosome on the replicated viral DNA. This is Nucleosome assembly protein 1-like 1 (NAP1L1) from Homo sapiens (Human).